A 613-amino-acid chain; its full sequence is Probable Xaa-Pro aminopeptidase P (613 aa).

4 residues coordinate Mn(2+): Asp408, Asp419, Glu517, and Glu531.

It belongs to the peptidase M24B family. Mn(2+) serves as cofactor.

The enzyme catalyses Release of any N-terminal amino acid, including proline, that is linked to proline, even from a dipeptide or tripeptide.. Catalyzes the removal of a penultimate prolyl residue from the N-termini of peptides. The polypeptide is Probable Xaa-Pro aminopeptidase P (ampp) (Penicillium rubens (strain ATCC 28089 / DSM 1075 / NRRL 1951 / Wisconsin 54-1255) (Penicillium chrysogenum)).